Here is a 64-residue protein sequence, read N- to C-terminus: uncharacterized protein (64 aa).

This is an uncharacterized protein from Mycoplasma (Bacteriophage L2).